Consider the following 976-residue polypeptide: Mast/stem cell growth factor receptor Kit (976 aa).

The N-terminal stretch at 1–25 (MRGARGAWDFLCVLLLLLRVQTGSS) is a signal peptide. Residues 26-524 (QPSVSPGEPS…QIHPHTLFTP (499 aa)) lie on the Extracellular side of the membrane. 5 consecutive Ig-like C2-type domains span residues 27-112 (PSVS…VFVR), 121-205 (DRSL…LKVR), 212-308 (PVVS…LEVV), 317-410 (PMIN…VYVN), and 413-507 (PEIL…FNFA). A disulfide bridge connects residues C58 and C97. Residues N130 and N145 are each glycosylated (N-linked (GlcNAc...) asparagine). 3 cysteine pairs are disulfide-bonded: C136–C186, C151–C183, and C233–C290. 8 N-linked (GlcNAc...) asparagine glycosylation sites follow: N283, N293, N300, N320, N352, N367, N463, and N486. Cysteines 428 and 491 form a disulfide. Residues 525–545 (LLIGFVIVAGMMCIIVMILTY) form a helical membrane-spanning segment. At 546-976 (KYLQKPMYEV…SQPLLVHDDV (431 aa)) the chain is on the cytoplasmic side. Y547, Y553, Y568, and Y570 each carry phosphotyrosine; by autocatalysis. Y568 is a binding site for Mg(2+). Residues 568 to 570 (YVY) form an important for interaction with phosphotyrosine-binding proteins region. In terms of domain architecture, Protein kinase spans 589-937 (LSFGKTLGAG…ISESTNHIYS (349 aa)). ATP contacts are provided by residues 596–603 (GAGAFGKV), K623, and 671–677 (EYCCYGD). A phosphotyrosine; by autocatalysis mark is found at Y703, Y721, and Y730. Residues S741 and S746 each carry the phosphoserine; by PKC/PRKCA modification. Catalysis depends on D792, which acts as the Proton acceptor. Position 796 (R796) interacts with ATP. N797 and D810 together coordinate Mg(2+). S821 carries the post-translational modification Phosphoserine. At Y823 the chain carries Phosphotyrosine; by autocatalysis. S891 bears the Phosphoserine mark. A phosphotyrosine; by autocatalysis mark is found at Y900 and Y936. Phosphoserine is present on S959.

Belongs to the protein kinase superfamily. Tyr protein kinase family. CSF-1/PDGF receptor subfamily. As to quaternary structure, monomer in the absence of bound KITLG/SCF. Homodimer in the presence of bound KITLG/SCF, forming a heterotetramer with two KITLG/SCF molecules. Interacts (via phosphorylated tyrosine residues) with the adapter proteins GRB2 and GRB7 (via SH2 domain), and SH2B2/APS. Interacts (via C-terminus) with MPDZ (via the tenth PDZ domain). Interacts (via phosphorylated tyrosine residues) with PIK3R1 and PIK3 catalytic subunit. Interacts (via phosphorylated tyrosine) with CRK (isoform Crk-II), FYN, SHC1 and MATK/CHK (via SH2 domain). Interacts with LYN and FES/FPS. Interacts (via phosphorylated tyrosine residues) with the protein phosphatases PTPN6/SHP-1 (via SH2 domain), PTPN11/SHP-2 (via SH2 domain) and PTPRU. Interacts with PLCG1. Interacts with DOK1 and TEC. Interacts (KITLG/SCF-bound) with IL1RL1. Interacts with IL1RAP (independent of stimulation with KITLG/SCF). A mast cell-specific KITLG/SCF-induced interleukin-33 signaling complex contains IL1RL1, IL1RAP, KIT and MYD88. Post-translationally, ubiquitinated by SOCS6. KIT is rapidly ubiquitinated after autophosphorylation induced by KITLG/SCF binding, leading to internalization and degradation. In terms of processing, autophosphorylated on tyrosine residues. KITLG/SCF binding enhances autophosphorylation. Isoform 1 shows low levels of tyrosine phosphorylation in the absence of added KITLG/SCF (in vitro). Kinase activity is down-regulated by phosphorylation on serine residues by protein kinase C family members. Phosphorylation at Tyr-568 is required for interaction with PTPN11/SHP-2, CRK (isoform Crk-II) and members of the SRC tyrosine-protein kinase family. Phosphorylation at Tyr-570 is required for interaction with PTPN6/SHP-1. Phosphorylation at Tyr-703, Tyr-823 and Tyr-936 is important for interaction with GRB2. Phosphorylation at Tyr-721 is important for interaction with PIK3R1. Phosphorylation at Tyr-823 and Tyr-936 is important for interaction with GRB7. As to expression, in testis, detected in spermatogonia in the basal layer and in interstitial Leydig cells but not in Sertoli cells or spermatocytes inside the seminiferous tubules (at protein level). Expression is maintained in ejaculated spermatozoa (at protein level).

The protein localises to the cell membrane. Its subcellular location is the cytoplasm. It carries out the reaction L-tyrosyl-[protein] + ATP = O-phospho-L-tyrosyl-[protein] + ADP + H(+). Present in an inactive conformation in the absence of bound ligand. KITLG/SCF binding leads to dimerization and activation by autophosphorylation on tyrosine residues. Activity is down-regulated by PRKCA-mediated phosphorylation on serine residues. Inhibited by imatinib/STI-571 (Gleevec) and sunitinib; these compounds maintain the kinase in an inactive conformation. Functionally, tyrosine-protein kinase that acts as a cell-surface receptor for the cytokine KITLG/SCF and plays an essential role in the regulation of cell survival and proliferation, hematopoiesis, stem cell maintenance, gametogenesis, mast cell development, migration and function, and in melanogenesis. In response to KITLG/SCF binding, KIT can activate several signaling pathways. Phosphorylates PIK3R1, PLCG1, SH2B2/APS and CBL. Activates the AKT1 signaling pathway by phosphorylation of PIK3R1, the regulatory subunit of phosphatidylinositol 3-kinase. Activated KIT also transmits signals via GRB2 and activation of RAS, RAF1 and the MAP kinases MAPK1/ERK2 and/or MAPK3/ERK1. Promotes activation of STAT family members STAT1, STAT3, STAT5A and STAT5B. Activation of PLCG1 leads to the production of the cellular signaling molecules diacylglycerol and inositol 1,4,5-trisphosphate. KIT signaling is modulated by protein phosphatases, and by rapid internalization and degradation of the receptor. Activated KIT promotes phosphorylation of the protein phosphatases PTPN6/SHP-1 and PTPRU, and of the transcription factors STAT1, STAT3, STAT5A and STAT5B. Promotes phosphorylation of PIK3R1, CBL, CRK (isoform Crk-II), LYN, MAPK1/ERK2 and/or MAPK3/ERK1, PLCG1, SRC and SHC1. The protein is Mast/stem cell growth factor receptor Kit (KIT) of Homo sapiens (Human).